We begin with the raw amino-acid sequence, 447 residues long: Tubulin alpha chain (447 aa).

GTP is bound by residues Gln11, Glu71, Gly144, Thr145, Thr179, Asn206, and Asn228. Residue Glu71 participates in Mg(2+) binding. Glu254 is an active-site residue.

This sequence belongs to the tubulin family. In terms of assembly, dimer of alpha and beta chains. A typical microtubule is a hollow water-filled tube with an outer diameter of 25 nm and an inner diameter of 15 nM. Alpha-beta heterodimers associate head-to-tail to form protofilaments running lengthwise along the microtubule wall with the beta-tubulin subunit facing the microtubule plus end conferring a structural polarity. Microtubules usually have 13 protofilaments but different protofilament numbers can be found in some organisms and specialized cells. Mg(2+) is required as a cofactor.

The protein localises to the cytoplasm. The protein resides in the cytoskeleton. It carries out the reaction GTP + H2O = GDP + phosphate + H(+). In terms of biological role, tubulin is the major constituent of microtubules, a cylinder consisting of laterally associated linear protofilaments composed of alpha- and beta-tubulin heterodimers. Microtubules grow by the addition of GTP-tubulin dimers to the microtubule end, where a stabilizing cap forms. Below the cap, tubulin dimers are in GDP-bound state, owing to GTPase activity of alpha-tubulin. The polypeptide is Tubulin alpha chain (TUBA) (Avena sativa (Oat)).